The following is a 66-amino-acid chain: Protein I177L (66 aa).

This sequence belongs to the asfivirus I177L family.

The protein resides in the virion. In African swine fever virus (isolate Tick/Malawi/Lil 20-1/1983) (ASFV), this protein is Protein I177L.